The chain runs to 184 residues: Helix-loop-helix protein ngn-1 (184 aa).

The disordered stretch occupies residues 1-55; it reads MYHHSPFYPHHLQTGEQDLDMERENDMDQNSKNSTQKPVKREKRRYRCRKRSPAT. Residues 28–37 show a composition bias toward polar residues; that stretch reads DQNSKNSTQK. Residues 38-52 are compositionally biased toward basic residues; that stretch reads PVKREKRRYRCRKRS. The tract at residues 62-75 is basic motif; the sequence is VRRDKANARERRRM. A bHLH domain is found at 62–114; the sequence is VRRDKANARERRRMNSLNDALEHLRGILPALPDEPKMTKIETLRKAQEYIASL. Residues 76–114 form a helix-loop-helix motif region; it reads NSLNDALEHLRGILPALPDEPKMTKIETLRKAQEYIASL. Positions 164 to 184 are disordered; it reads SNPPSQMYYHHHHQSPSFPHH. Residues 172–184 are compositionally biased toward basic residues; that stretch reads YHHHHQSPSFPHH.

As to quaternary structure, interacts with hlh-2; the interaction is direct.

It localises to the nucleus. Functionally, acts as a transcriptional regulator. Regulates expression of various genes, including homeobox protein unc-42 and helix-loop-helix protein hlh-34. Required for embryonic viability, neuromuscular development, organization of the nerve ring and neuronal cell body location. Regulates AIY neuron axon morphology and cell fate. Plays a role in cell autonomously establishing a neuronal left-right asymmetry. Involved in regulating glial specification. The chain is Helix-loop-helix protein ngn-1 from Caenorhabditis elegans.